Consider the following 567-residue polypeptide: Periplasmic [NiFe] hydrogenase large subunit (567 aa).

Glu-62 serves as a coordination point for Mg(2+). Ni(2+) contacts are provided by Cys-81 and Cys-84. Fe cation is bound at residue Cys-84. Leu-498 is a binding site for Mg(2+). Positions 546 and 549 each coordinate Ni(2+). Cys-549 is a Fe cation binding site. Mg(2+) is bound at residue His-552. Positions 553 to 567 (VIDGHTNEVHKFRIL) are excised as a propeptide.

It belongs to the [NiFe]/[NiFeSe] hydrogenase large subunit family. As to quaternary structure, heterodimer of a large and a small subunit. Ni(2+) is required as a cofactor. Fe cation serves as cofactor.

The protein localises to the periplasm. It carries out the reaction 2 Fe(III)-[cytochrome c3] + H2 = 2 Fe(II)-[cytochrome c3] + 2 H(+). Catalyzes the reversible oxidoreduction of molecular hydrogen, in conjunction with a specific electron acceptor, cytochrome c3. This Nitratidesulfovibrio vulgaris (strain DSM 19637 / Miyazaki F) (Desulfovibrio vulgaris) protein is Periplasmic [NiFe] hydrogenase large subunit (hydB).